Here is a 152-residue protein sequence, read N- to C-terminus: D-aminoacyl-tRNA deacylase (152 aa).

The Gly-cisPro motif, important for rejection of L-amino acids motif lies at 142-143 (GP).

It belongs to the DTD family. As to quaternary structure, homodimer.

Its subcellular location is the cytoplasm. The enzyme catalyses glycyl-tRNA(Ala) + H2O = tRNA(Ala) + glycine + H(+). It carries out the reaction a D-aminoacyl-tRNA + H2O = a tRNA + a D-alpha-amino acid + H(+). An aminoacyl-tRNA editing enzyme that deacylates mischarged D-aminoacyl-tRNAs. Also deacylates mischarged glycyl-tRNA(Ala), protecting cells against glycine mischarging by AlaRS. Acts via tRNA-based rather than protein-based catalysis; rejects L-amino acids rather than detecting D-amino acids in the active site. By recycling D-aminoacyl-tRNA to D-amino acids and free tRNA molecules, this enzyme counteracts the toxicity associated with the formation of D-aminoacyl-tRNA entities in vivo and helps enforce protein L-homochirality. The polypeptide is D-aminoacyl-tRNA deacylase (Paraburkholderia phytofirmans (strain DSM 17436 / LMG 22146 / PsJN) (Burkholderia phytofirmans)).